A 326-amino-acid polypeptide reads, in one-letter code: F-box/LRR-repeat protein 12 (326 aa).

Residues 1 to 47 (MATFADLPDSVLLEIFSYLPVRDRIRISRVCHHWKKLVDDRWLWRHV) enclose the F-box domain. LRR repeat units lie at residues 51–78 (LYTM…RMGG), 86–111 (APQL…CLHV), 161–185 (VPAF…VLGG), 186–211 (TYRV…EVLG), 212–236 (CTLS…IRLT), 237–261 (VRGL…CLLG), and 266–291 (PEMP…ELQG).

As to quaternary structure, interacts with SKP1 and CUL1.

The protein operates within protein modification; protein ubiquitination. Its function is as follows. Substrate-recognition component of the SCF (SKP1-CUL1-F-box protein)-type E3 ubiquitin ligase complex. Mediates the polyubiquitination and proteasomal degradation of CAMK1 leading to disruption of cyclin D1/CDK4 complex assembly which results in G1 cell cycle arrest in lung epithelia. This is F-box/LRR-repeat protein 12 (FBXL12) from Bos taurus (Bovine).